A 241-amino-acid polypeptide reads, in one-letter code: DNA repair protein RecO (241 aa).

This sequence belongs to the RecO family.

Its function is as follows. Involved in DNA repair and RecF pathway recombination. In Orientia tsutsugamushi (strain Ikeda) (Rickettsia tsutsugamushi), this protein is DNA repair protein RecO.